The following is a 313-amino-acid chain: Beta-ketoacyl-[acyl-carrier-protein] synthase III (313 aa).

Active-site residues include Cys112 and His238. An ACP-binding region spans residues 239–243; that stretch reads QANIR. The active site involves Asn268.

It belongs to the thiolase-like superfamily. FabH family. In terms of assembly, homodimer.

It is found in the cytoplasm. The catalysed reaction is malonyl-[ACP] + acetyl-CoA + H(+) = 3-oxobutanoyl-[ACP] + CO2 + CoA. It functions in the pathway lipid metabolism; fatty acid biosynthesis. Functionally, catalyzes the condensation reaction of fatty acid synthesis by the addition to an acyl acceptor of two carbons from malonyl-ACP. Catalyzes the first condensation reaction which initiates fatty acid synthesis and may therefore play a role in governing the total rate of fatty acid production. Possesses both acetoacetyl-ACP synthase and acetyl transacylase activities. Its substrate specificity determines the biosynthesis of branched-chain and/or straight-chain of fatty acids. The protein is Beta-ketoacyl-[acyl-carrier-protein] synthase III of Staphylococcus aureus (strain COL).